We begin with the raw amino-acid sequence, 609 residues long: Grainyhead-like protein 1 homolog (609 aa).

A transcription activation region spans residues 1-91 (MTQDYDNKRP…EHDHADHEHS (91 aa)). Residues 183–207 (SDHFTSNNQPPNSQRRTPDSTFSET) are disordered. Over residues 185–206 (HFTSNNQPPNSQRRTPDSTFSE) the composition is skewed to polar residues. Residues 239–465 (AGNNFEYTLE…DLDTQPVLFI (227 aa)) enclose the Grh/CP2 DB domain. Interaction with DNA regions lie at residues 371-380 (TDFSSQKGVK) and 418-421 (RKIR).

This sequence belongs to the grh/CP2 family. Grainyhead subfamily. Binds DNA as homodimer.

The protein localises to the nucleus. In terms of biological role, transcription factor involved in epithelial development. Binds directly to the consensus DNA sequence 5'-AACCGGTT-3' and modulates expression of epidermal-specific genes, including XK81A1. Important regulator of DSG1 in the context of epidermal differentiation. Regulates the maintenance of skin barrier. No genetic interaction with GRHL3, nor functional cooperativity due to diverse target gene selectivity during epithelia development. Functions downstream of BMP-signaling cascade modulating endogenous bmp4-responsive targets. In Xenopus laevis (African clawed frog), this protein is Grainyhead-like protein 1 homolog.